We begin with the raw amino-acid sequence, 437 residues long: GTPase Der (437 aa).

2 EngA-type G domains span residues 4–167 (PVVA…AEKD) and 175–352 (IRFS…DHQH). GTP is bound by residues 10–17 (GRPNVGKS), 57–61 (DTGGI), 119–122 (NKVD), 181–188 (GRPNVGKS), 229–233 (DTAGI), and 294–297 (NKWD). In terms of domain architecture, KH-like spans 353 to 437 (RRIQSAVLND…PIRLIKRRRK (85 aa)).

The protein belongs to the TRAFAC class TrmE-Era-EngA-EngB-Septin-like GTPase superfamily. EngA (Der) GTPase family. In terms of assembly, associates with the 50S ribosomal subunit.

In terms of biological role, GTPase that plays an essential role in the late steps of ribosome biogenesis. The protein is GTPase Der of Limosilactobacillus fermentum (strain NBRC 3956 / LMG 18251) (Lactobacillus fermentum).